Here is a 738-residue protein sequence, read N- to C-terminus: Polyribonucleotide nucleotidyltransferase (738 aa).

2 residues coordinate Mg(2+): Asp487 and Asp493. Residues 554-613 (PKIVTMTINPDKIRDVIGPGGKMINSIIDQTGVKIDIEQDGTVFIASTDQEGIDLAMSMI) form the KH domain. Positions 623–691 (GEVYDATVRR…DKGRVNASRK (69 aa)) constitute an S1 motif domain. A disordered region spans residues 704–738 (EAYEAKRKAARESRPPRDSRPPRRDGDRRPPRSTN).

Belongs to the polyribonucleotide nucleotidyltransferase family. It depends on Mg(2+) as a cofactor.

It is found in the cytoplasm. It carries out the reaction RNA(n+1) + phosphate = RNA(n) + a ribonucleoside 5'-diphosphate. Its function is as follows. Involved in mRNA degradation. Catalyzes the phosphorolysis of single-stranded polyribonucleotides processively in the 3'- to 5'-direction. The sequence is that of Polyribonucleotide nucleotidyltransferase from Exiguobacterium sp. (strain ATCC BAA-1283 / AT1b).